We begin with the raw amino-acid sequence, 122 residues long: UPF0102 protein Mpe_A3766 (122 aa).

Belongs to the UPF0102 family.

This Methylibium petroleiphilum (strain ATCC BAA-1232 / LMG 22953 / PM1) protein is UPF0102 protein Mpe_A3766.